Here is a 783-residue protein sequence, read N- to C-terminus: B-cell scaffold protein with ankyrin repeats (783 aa).

Residues 1–154 (MLPVASGTRG…GYISVIRQIL (154 aa)) are interaction with ITPR2. The TIR domain maps to 25–153 (NAKDILLLYE…DGYISVIRQI (129 aa)). The region spanning 199 to 326 (VLPGEIPCEK…EIPYYEFKHL (128 aa)) is the DBB domain. ANK repeat units follow at residues 341 to 370 (ELPTLLHCAAKFGLKNLALHLLQCSGATRA) and 377 to 407 (DGSDLLHIAERHGHEELKEVFEDFLSQNTGR). 4 disordered regions span residues 422–521 (FSTY…AASQ), 538–586 (MERS…EDNE), 604–624 (SFIINRPPAPTPRPTHIPPKE), and 641–670 (RQSDGDKFYSLPKKPDKTRMEGPTFPSTRD). The segment covering 444-479 (RNTDRSEEPERSVEMKEEEAGAEARRSLSEGERESS) has biased composition (basic and acidic residues). The segment covering 505–515 (HCRPPLLPPRP) has biased composition (pro residues). Positions 549 to 565 (ARPETREESSREEKKEE) are enriched in basic and acidic residues. Positions 566-586 (AQEEEEEEENPYAFAETEDNE) are enriched in acidic residues. A compositionally biased stretch (pro residues) spans 610–620 (PPAPTPRPTHI). Basic and acidic residues predominate over residues 641 to 660 (RQSDGDKFYSLPKKPDKTRM). Tyr-649 is subject to Phosphotyrosine.

Interacts with LYN, ITPR1 and ITPR2. Phosphorylated on tyrosines upon BCR activation. Specifically expressed in spleen. Highly expressed in immature B-cells and recirculating B-cells, and at low levels in pro-B and pre-B cells.

Functionally, involved in B-cell receptor (BCR)-induced Ca(2+) mobilization from intracellular stores. Promotes Lyn-mediated phosphorylation of IP3 receptors 1 and 2. This chain is B-cell scaffold protein with ankyrin repeats (Bank1), found in Mus musculus (Mouse).